A 389-amino-acid chain; its full sequence is viridiflorene synthase Agr2 (389 aa).

The N-terminal stretch at 1 to 15 is a signal peptide; that stretch reads MVWDFVLSLFHSLLA. Mg(2+) contacts are provided by Asp-128, Asn-263, Ser-267, and Glu-271. Positions 128-132 match the DDXXD motif motif; sequence DEVTD. Positions 360 and 361 each coordinate (2E,6E)-farnesyl diphosphate.

It belongs to the terpene synthase family. Mg(2+) is required as a cofactor.

It carries out the reaction (2E,6E)-farnesyl diphosphate = viridiflorene + diphosphate. Terpene cyclase that catalyzes the cyclization of farnesyl diphosphate (FPP) to viridiflorene. This is viridiflorene synthase Agr2 from Cyclocybe aegerita (Black poplar mushroom).